We begin with the raw amino-acid sequence, 377 residues long: DNA replication and repair protein RecF (377 aa).

30–37 (GLNGSGKT) lines the ATP pocket.

Belongs to the RecF family.

Its subcellular location is the cytoplasm. In terms of biological role, the RecF protein is involved in DNA metabolism; it is required for DNA replication and normal SOS inducibility. RecF binds preferentially to single-stranded, linear DNA. It also seems to bind ATP. This Cytophaga hutchinsonii (strain ATCC 33406 / DSM 1761 / CIP 103989 / NBRC 15051 / NCIMB 9469 / D465) protein is DNA replication and repair protein RecF.